Reading from the N-terminus, the 88-residue chain is Putative membrane protein insertion efficiency factor (88 aa).

The protein belongs to the UPF0161 family.

Its subcellular location is the cell inner membrane. In terms of biological role, could be involved in insertion of integral membrane proteins into the membrane. This chain is Putative membrane protein insertion efficiency factor, found in Prochlorococcus marinus (strain MIT 9313).